The sequence spans 86 residues: Neurotoxin 3FTx-8a (86 aa).

A signal peptide spans 1-21 (MKTLLLTLVVVTIVCLDLGYT). Cystine bridges form between Cys24–Cys45, Cys27–Cys32, Cys38–Cys63, Cys67–Cys78, and Cys79–Cys84.

In terms of tissue distribution, expressed by the venom gland.

Its subcellular location is the secreted. Functionally, binds with low affinity to muscular (alpha-1-beta-1-delta-epsilon/CHRNA1-CHRNB1-CHRND-CHRNE) and very low affinity to neuronal (alpha-7/CHRNA7) nicotinic acetylcholine receptor (nAChR). The polypeptide is Neurotoxin 3FTx-8a (Bungarus fasciatus (Banded krait)).